A 773-amino-acid polypeptide reads, in one-letter code: Ergothioneine biosynthesis protein 1 (773 aa).

Residues 16–322 (PESIEQSLKR…ESTIADYSTY (307 aa)) form an L-histidine N(alpha)-methyltransferase region. Residue Tyr51 coordinates L-histidine. S-adenosyl-L-methionine contacts are provided by residues Gly85, Lys91, Asp112, and 142–143 (CF). L-histidine-binding positions include Asn172, Tyr212, and 287 to 289 (EES). Residues 347–772 (ALRKVWLFIT…YAWIGARLVK (426 aa)) are hercynylcysteine S-oxide synthase. Fe cation-binding residues include His382, His476, and His480.

This sequence in the N-terminal section; belongs to the methyltransferase superfamily. EgtD family. It in the C-terminal section; belongs to the EgtB family. Fe(2+) serves as cofactor.

Its subcellular location is the cytoplasm. It is found in the nucleus. The enzyme catalyses L-histidine + 3 S-adenosyl-L-methionine = hercynine + 3 S-adenosyl-L-homocysteine + 3 H(+). It catalyses the reaction hercynine + L-cysteine + O2 = S-(hercyn-2-yl)-L-cysteine S-oxide + H2O. It functions in the pathway amino-acid biosynthesis; ergothioneine biosynthesis. Its function is as follows. Catalyzes the SAM-dependent triple methylation of the alpha-amino group of histidine to form hercynine and subsequent conjugation with cysteine and oxygen to form hercynylcysteine sulfoxide, the first two steps in the biosynthesis pathway of ergothioneine. May play a role in meiosis. This is Ergothioneine biosynthesis protein 1 from Schizosaccharomyces pombe (strain 972 / ATCC 24843) (Fission yeast).